Reading from the N-terminus, the 266-residue chain is Glucosamine-6-phosphate deaminase (266 aa).

Catalysis depends on aspartate 72, which acts as the Proton acceptor; for enolization step. The active-site For ring-opening step is the aspartate 141. Histidine 143 serves as the catalytic Proton acceptor; for ring-opening step. Glutamate 148 (for ring-opening step) is an active-site residue.

Belongs to the glucosamine/galactosamine-6-phosphate isomerase family. NagB subfamily. As to quaternary structure, homohexamer; trimer of disulfide-linked dimers.

It catalyses the reaction alpha-D-glucosamine 6-phosphate + H2O = beta-D-fructose 6-phosphate + NH4(+). It functions in the pathway amino-sugar metabolism; N-acetylneuraminate degradation; D-fructose 6-phosphate from N-acetylneuraminate: step 5/5. Its activity is regulated as follows. Allosterically activated by N-acetylglucosamine 6-phosphate (GlcNAc6P). Its function is as follows. Catalyzes the reversible isomerization-deamination of glucosamine 6-phosphate (GlcN6P) to form fructose 6-phosphate (Fru6P) and ammonium ion. The chain is Glucosamine-6-phosphate deaminase from Shigella dysenteriae serotype 1 (strain Sd197).